Here is a 247-residue protein sequence, read N- to C-terminus: ATP synthase subunit a (247 aa).

The next 6 helical transmembrane spans lie at 24-44 (IAFTNSSAYMFLAVALTSLLM), 82-102 (FFPFVFSIFMLVTVSNLVGII), 112-132 (IIVTAALAFLVFFTVLIYGFY), 141-161 (LFVPSGIPVVILPLVVTIEVI), 194-214 (MLGAMGIVGVFGAVLPLALVV), and 219-239 (LELLVAFLQAYVFTILTCIYI).

The protein belongs to the ATPase A chain family. F-type ATPases have 2 components, CF(1) - the catalytic core - and CF(0) - the membrane proton channel. CF(1) has five subunits: alpha(3), beta(3), gamma(1), delta(1), epsilon(1). CF(0) has three main subunits: a(1), b(2) and c(9-12). The alpha and beta chains form an alternating ring which encloses part of the gamma chain. CF(1) is attached to CF(0) by a central stalk formed by the gamma and epsilon chains, while a peripheral stalk is formed by the delta and b chains.

It localises to the cell inner membrane. Functionally, key component of the proton channel; it plays a direct role in the translocation of protons across the membrane. The chain is ATP synthase subunit a from Nitrobacter winogradskyi (strain ATCC 25391 / DSM 10237 / CIP 104748 / NCIMB 11846 / Nb-255).